We begin with the raw amino-acid sequence, 145 residues long: Large ribosomal subunit protein uL16 (145 aa).

Positions 1-17 (MLMPKRVKHRRVHRGRM) are enriched in basic residues. The disordered stretch occupies residues 1-22 (MLMPKRVKHRRVHRGRMTGKAT).

It belongs to the universal ribosomal protein uL16 family. Part of the 50S ribosomal subunit.

In terms of biological role, binds 23S rRNA and is also seen to make contacts with the A and possibly P site tRNAs. The sequence is that of Large ribosomal subunit protein uL16 from Ruminiclostridium cellulolyticum (strain ATCC 35319 / DSM 5812 / JCM 6584 / H10) (Clostridium cellulolyticum).